A 586-amino-acid polypeptide reads, in one-letter code: Paxillin (586 aa).

The residue at position 1 (Met1) is an N-acetylmethionine. The short motif at 3-15 is the LD motif 1 element; it reads DLDALLADLESTT. Residues 13 to 138 are disordered; sequence STTSHISKRP…PSPTVMSSSL (126 aa). Residue Tyr31 is modified to Phosphotyrosine; by PTK6. Residues 45–54 show a composition bias toward pro residues; that stretch reads VPPPVPPPPS. Residues Ser83 and Ser85 each carry the phosphoserine modification. A compositionally biased stretch (low complexity) spans 86-98; the sequence is PIYSSSTKNSSAS. Tyr88 carries the phosphotyrosine modification. Ser106 bears the Phosphoserine mark. Position 118 is a phosphotyrosine; by PTK6 (Tyr118). Residues Ser119, Ser126, and Ser130 each carry the phosphoserine modification. Residues 121–137 show a composition bias toward polar residues; that stretch reads PNKQKSAEPSPTVMSSS. At Thr132 the chain carries Phosphothreonine. 3 positions are modified to phosphoserine: Ser137, Ser140, and Ser143. The short motif at 144-156 is the LD motif 2 element; the sequence is ELDRLLLELNAVQ. Residue Tyr210 is modified to Phosphotyrosine. Residues 220–241 are disordered; it reads GGKAGPLMKEKPKRNGGRGLED. Residues 245 to 257 carry the LD motif 3 motif; it reads SVESLLDELENSV. Position 259 is a phosphoserine (Ser259). The disordered stretch occupies residues 266–290; that stretch reads VNQGEMSSPQRVTSSQQQTRISASS. Position 273 is a phosphoserine; by CDK5 (Ser273). Phosphoserine occurs at positions 279, 287, 290, 301, 317, 327, and 335. The tract at residues 291-310 is required for binding to PARVA and ILK; that stretch reads ATRELDELMASLSDFKFMAQ. Residues 294–305 carry the LD motif 4 motif; that stretch reads ELDELMASLSDF. A disordered region spans residues 309-329; sequence AQGKTGSSSPPGGLSKPGSQL. A compositionally biased stretch (low complexity) spans 310 to 329; it reads QGKTGSSSPPGGLSKPGSQL. Residues 328–340 carry the LD motif 5 motif; it reads QLDSMLGSLQSDL. LIM zinc-binding domains follow at residues 353 to 403, 412 to 462, and 471 to 521; these read CGAC…CEKD, CYYC…CRKD, and CGGC…CEVH. Position 528 is a phosphoserine (Ser528). The LIM zinc-binding 4 domain maps to 530–580; sequence CSGCQKPITGRCITAMAKKFHPEHFVCAFCLKQLNKGTFKEQNDKPYCQSC.

Belongs to the paxillin family. In terms of assembly, interacts in vitro with VCL/vinculin as well as to the SH3 domain of SRC and, when tyrosine phosphorylated, to the SH2 domain of CRK. Interacts with GIT1. Interacts with NUDT16L1/SDOS. Interacts with PTK2/FAK1. Interacts with PTK2B/PYK2. Interacts with ASAP2. Interacts with unphosphorylated ITGA4. Interacts with RNF5. Interacts with PDCD10. Interacts with NEK3, the interaction is prolactin-dependent. Interacts with PTK6. Interacts with TGFB1I1. Interacts with SORBS1. Interacts with PARVB. Interacts (via LD motif 4) with PARVA/PARVIN. Interacts (via LD motif 4) with ILK. Interacts (via cytoplasmic domain) with CEACAM1; the interaction is phosphotyrosyl-dependent. Interacts with LIMA1; this complex stabilizes actin dynamics. Interacts with CD36 (via C-terminus). Interacts with TRIM15. Interacts with PAK4; PAK4 acts as a scaffold to suppport PAXI phosphorylation at Ser-301. In terms of processing, phosphorylated by MAPK1/ERK2. Phosphorylated on tyrosine residues during integrin-mediated cell adhesion, embryonic development, fibroblast transformation and following stimulation of cells by mitogens. Phosphorylation at Ser-273 by CDK5 reduces its interaction with PTK2/FAK1 in matrix-cell focal adhesions (MCFA) during oligodendrocytes (OLs) differentiation. Phosphorylation at Tyr-31 and Tyr-118 by PTK6 promote the activation of RAC1 via CRK/CrKII, thereby promoting migration and invasion. Phosphorylation at Ser-279 by SLK is required for PXN redistribution and cell motility. Phosphorylation at Ser-301 promotes focal adhesion disassembly during cell migration.

The protein localises to the cytoplasm. It is found in the cytoskeleton. It localises to the cell junction. The protein resides in the focal adhesion. Its subcellular location is the cell cortex. Its function is as follows. Cytoskeletal protein involved in actin-membrane attachment at sites of cell adhesion to the extracellular matrix (focal adhesion). Recruits other proteins such as TRIM15 to focal adhesion. The chain is Paxillin from Rattus norvegicus (Rat).